Consider the following 338-residue polypeptide: 4-hydroxy-2-oxovalerate aldolase (338 aa).

The Pyruvate carboxyltransferase domain occupies 4-254; the sequence is PRLTDTTLRD…NPGLDVLALM (251 aa). Residue 12-13 participates in substrate binding; it reads RD. Mn(2+) is bound at residue Asp13. The active-site Proton acceptor is the His16. Positions 166 and 193 each coordinate substrate. Mn(2+)-binding residues include His193 and His195. Residue Tyr284 coordinates substrate.

It belongs to the 4-hydroxy-2-oxovalerate aldolase family.

It catalyses the reaction (S)-4-hydroxy-2-oxopentanoate = acetaldehyde + pyruvate. This Roseiflexus sp. (strain RS-1) protein is 4-hydroxy-2-oxovalerate aldolase.